The following is an 88-amino-acid chain: Beta-insect excitatory toxin LqhIT1d (88 aa).

The signal sequence occupies residues 1 to 18; it reads MKFFLLFLVVLPIMGVLG. The LCN-type CS-alpha/beta domain occupies 20–83; the sequence is KNGFAVDSNG…ISDTRKKLCD (64 aa). Disulfide bonds link Cys-34–Cys-55, Cys-40–Cys-60, Cys-44–Cys-62, and Cys-56–Cys-82.

The protein belongs to the long (4 C-C) scorpion toxin superfamily. Sodium channel inhibitor family. Beta subfamily. As to expression, expressed by the venom gland.

It is found in the secreted. Excitatory insect toxins induce a spastic paralysis. They bind voltage-independently at site-4 of sodium channels (Nav) and shift the voltage of activation toward more negative potentials thereby affecting sodium channel activation and promoting spontaneous and repetitive firing. The sequence is that of Beta-insect excitatory toxin LqhIT1d from Leiurus hebraeus (Hebrew deathstalker scorpion).